Consider the following 508-residue polypeptide: Phosphoenolpyruvate carboxylase (508 aa).

Belongs to the PEPCase type 2 family. In terms of assembly, homotetramer. Requires Mg(2+) as cofactor.

It catalyses the reaction oxaloacetate + phosphate = phosphoenolpyruvate + hydrogencarbonate. In terms of biological role, catalyzes the irreversible beta-carboxylation of phosphoenolpyruvate (PEP) to form oxaloacetate (OAA), a four-carbon dicarboxylic acid source for the tricarboxylic acid cycle. In Picrophilus torridus (strain ATCC 700027 / DSM 9790 / JCM 10055 / NBRC 100828 / KAW 2/3), this protein is Phosphoenolpyruvate carboxylase.